Consider the following 274-residue polypeptide: 2,3,4,5-tetrahydropyridine-2,6-dicarboxylate N-succinyltransferase (274 aa).

Residues R106 and D143 each coordinate substrate.

Belongs to the transferase hexapeptide repeat family. Homotrimer.

It is found in the cytoplasm. It catalyses the reaction (S)-2,3,4,5-tetrahydrodipicolinate + succinyl-CoA + H2O = (S)-2-succinylamino-6-oxoheptanedioate + CoA. It functions in the pathway amino-acid biosynthesis; L-lysine biosynthesis via DAP pathway; LL-2,6-diaminopimelate from (S)-tetrahydrodipicolinate (succinylase route): step 1/3. This Acidovorax sp. (strain JS42) protein is 2,3,4,5-tetrahydropyridine-2,6-dicarboxylate N-succinyltransferase.